Reading from the N-terminus, the 439-residue chain is Adenylosuccinate synthetase (439 aa).

Residues 25 to 31, 53 to 55, and Lys62 each bind GTP; these read GDEGKGK and GHT. Asp26 (proton acceptor) is an active-site residue. 2 residues coordinate Mg(2+): Asp26 and Gly53. Residues 26–29 and 51–54 contribute to the IMP site; these read DEGK and NAGH. Catalysis depends on His54, which acts as the Proton donor. The IMP site is built by Thr141, Arg155, Asn232, and Thr247. Thr307 contributes to the GTP binding site. 307–313 is a binding site for substrate; sequence TTTNRPR. Position 311 (Arg311) interacts with IMP. GTP is bound by residues Arg313, 339–341, and 425–427; these read KLD and GVG.

It belongs to the adenylosuccinate synthetase family. Homodimer. Mg(2+) is required as a cofactor.

The protein resides in the cytoplasm. The catalysed reaction is IMP + L-aspartate + GTP = N(6)-(1,2-dicarboxyethyl)-AMP + GDP + phosphate + 2 H(+). Its pathway is purine metabolism; AMP biosynthesis via de novo pathway; AMP from IMP: step 1/2. Functionally, plays an important role in the salvage pathway for purine nucleotide biosynthesis. Catalyzes the first commited step in the biosynthesis of AMP from IMP. This Plasmodium chabaudi chabaudi protein is Adenylosuccinate synthetase.